The following is a 401-amino-acid chain: Tumor necrosis factor receptor superfamily member 11B (401 aa).

The N-terminal stretch at 1–21 is a signal peptide; it reads MNNLLCCALVFLDISIKWTTQ. TNFR-Cys repeat units follow at residues 24 to 62, 65 to 105, 107 to 142, and 145 to 185; these read FPPK…KTVC, CPDH…NRVC, CKEG…NTVC, and CPDG…DNIC. Intrachain disulfides connect C41–C54, C44–C62, C65–C80, C83–C97, C87–C105, C107–C118, C124–C142, and C145–C160. Residue N98 is glycosylated (N-linked (GlcNAc...) asparagine). N-linked (GlcNAc...) asparagine glycosylation is found at N152, N165, and N178. C166 and C185 are joined by a disulfide. Death domains follow at residues 198 to 269 and 270 to 365; these read DVTL…IVKK and IIQD…TQSL. An N-linked (GlcNAc...) asparagine glycan is attached at N289.

In terms of assembly, homodimer. Interacts with TNFSF10 and TNFSF11. Post-translationally, N-glycosylated. Contains sialic acid residues. In terms of processing, the N-terminus is blocked. Highly expressed in adult lung, heart, kidney, liver, spleen, thymus, prostate, ovary, small intestine, thyroid, lymph node, trachea, adrenal gland, testis, and bone marrow. Detected at very low levels in brain, placenta and skeletal muscle. Highly expressed in fetal kidney, liver and lung.

The protein resides in the secreted. In terms of biological role, acts as a decoy receptor for TNFSF11/RANKL and thereby neutralizes its function in osteoclastogenesis. Inhibits the activation of osteoclasts and promotes osteoclast apoptosis in vitro. Bone homeostasis seems to depend on the local ratio between TNFSF11 and TNFRSF11B. May also play a role in preventing arterial calcification. May act as decoy receptor for TNFSF10/TRAIL and protect against apoptosis. TNFSF10/TRAIL binding blocks the inhibition of osteoclastogenesis. This Homo sapiens (Human) protein is Tumor necrosis factor receptor superfamily member 11B (TNFRSF11B).